Consider the following 346-residue polypeptide: Serine/threonine-protein phosphatase PP1(5.9) (346 aa).

D102, H104, D130, and N162 together coordinate Mn(2+). The active-site Proton donor is the H163. Residues H211 and H287 each contribute to the Mn(2+) site.

It belongs to the PPP phosphatase family. PP-1 subfamily. The cofactor is Mn(2+).

It catalyses the reaction O-phospho-L-seryl-[protein] + H2O = L-seryl-[protein] + phosphate. The enzyme catalyses O-phospho-L-threonyl-[protein] + H2O = L-threonyl-[protein] + phosphate. This is Serine/threonine-protein phosphatase PP1(5.9) from Trypanosoma brucei brucei.